A 131-amino-acid chain; its full sequence is Small ribosomal subunit protein uS8 (131 aa).

Belongs to the universal ribosomal protein uS8 family. Part of the 30S ribosomal subunit. Contacts proteins S5 and S12.

In terms of biological role, one of the primary rRNA binding proteins, it binds directly to 16S rRNA central domain where it helps coordinate assembly of the platform of the 30S subunit. This chain is Small ribosomal subunit protein uS8, found in Nitrosomonas europaea (strain ATCC 19718 / CIP 103999 / KCTC 2705 / NBRC 14298).